The primary structure comprises 761 residues: 5-methyltetrahydropteroyltriglutamate--homocysteine methyltransferase (761 aa).

Residues 16-19 (RELK) and K116 contribute to the 5-methyltetrahydropteroyltri-L-glutamate site. L-homocysteine contacts are provided by residues 437–439 (IGS) and E490. L-methionine is bound by residues 437-439 (IGS) and E490. 5-methyltetrahydropteroyltri-L-glutamate-binding positions include 521 to 522 (RC) and W567. D605 serves as a coordination point for L-homocysteine. D605 contributes to the L-methionine binding site. E611 is a binding site for 5-methyltetrahydropteroyltri-L-glutamate. Zn(2+) contacts are provided by H647, C649, and E671. H700 functions as the Proton donor in the catalytic mechanism. C732 serves as a coordination point for Zn(2+).

It belongs to the vitamin-B12 independent methionine synthase family. The cofactor is Zn(2+).

It carries out the reaction 5-methyltetrahydropteroyltri-L-glutamate + L-homocysteine = tetrahydropteroyltri-L-glutamate + L-methionine. Its pathway is amino-acid biosynthesis; L-methionine biosynthesis via de novo pathway; L-methionine from L-homocysteine (MetE route): step 1/1. In terms of biological role, catalyzes the transfer of a methyl group from 5-methyltetrahydrofolate to homocysteine resulting in methionine formation. The chain is 5-methyltetrahydropteroyltriglutamate--homocysteine methyltransferase from Chromohalobacter salexigens (strain ATCC BAA-138 / DSM 3043 / CIP 106854 / NCIMB 13768 / 1H11).